A 424-amino-acid polypeptide reads, in one-letter code: ATP-sensitive inward rectifier potassium channel 8 (424 aa).

The Cytoplasmic segment spans residues 1–69; sequence MLARKSIIPE…IFTTLVDLKW (69 aa). Phosphoserine is present on Ser-6. The chain crosses the membrane as a helical span at residues 70–94; sequence RHTLVIFTMSFLCSWLLFAIMWWLV. At 95-126 the chain is on the extracellular side; that stretch reads AFAHGDIYAYMEKGITEKSGLESAVCVTNVRS. An intramembrane region (helical; Pore-forming) is located at residues 127–138; that stretch reads FTSAFLFSIEVQ. An intramembrane region (pore-forming) is located at residues 139-145; that stretch reads VTIGFGG. The Selectivity filter motif lies at 140 to 145; sequence TIGFGG. The Extracellular portion of the chain corresponds to 146-154; the sequence is RMMTEECPL. The chain crosses the membrane as a helical span at residues 155 to 176; the sequence is AITVLILQNIVGLIINAVMLGC. At 177 to 424 the chain is on the cytoplasmic side; sequence IFMKTAQAHR…PEGNQCPSES (248 aa). A disordered region spans residues 374 to 424; it reads LSHQNSLRKRNSMRRNNSMRRSNSIRRNNSSLMVPKVQFMTPEGNQCPSES. Over residues 387–404 the composition is skewed to low complexity; sequence RRNNSMRRSNSIRRNNSS.

Belongs to the inward rectifier-type potassium channel (TC 1.A.2.1) family. KCNJ8 subfamily. As to quaternary structure, interacts with ABCC9. Widely expressed, including in pancreatic islets, pituitary, skeletal muscle and heart.

It localises to the membrane. It carries out the reaction K(+)(in) = K(+)(out). Inward rectifier potassium channels are characterized by a greater tendency to allow potassium to flow into the cell rather than out of it. Their voltage dependence is regulated by the concentration of extracellular potassium; as external potassium is raised, the voltage range of the channel opening shifts to more positive voltages. The inward rectification is mainly due to the blockage of outward current by internal magnesium. This channel is activated by internal ATP and can be blocked by external barium. Can form a sulfonyllurea-sensitive but ATP-insensitive potassium channel with ABCC9. The polypeptide is ATP-sensitive inward rectifier potassium channel 8 (Kcnj8) (Rattus norvegicus (Rat)).